We begin with the raw amino-acid sequence, 972 residues long: Multiple C2 domain and transmembrane region protein 8 (972 aa).

Residues Met-1–Tyr-107 form the C2 1 domain. Residues Pro-142–Pro-203 form a disordered region. A compositionally biased stretch (basic residues) spans Ile-150 to His-159. Residues Ile-161 to Asn-173 show a composition bias toward polar residues. Positions Pro-179–Met-194 are enriched in pro residues. 3 C2 domains span residues Gly-232–Tyr-352, Ala-384–Phe-507, and Tyr-543–Tyr-669. Residues Asp-265, Asp-271, Asp-318, Asp-320, and Asp-325 each contribute to the Ca(2+) site. Transmembrane regions (helical) follow at residues Ile-803–Leu-823 and Thr-924–Met-944.

It belongs to the MCTP family. Ca(2+) is required as a cofactor. Expressed in root hairs.

It localises to the membrane. Its subcellular location is the vesicle. May function as a signaling molecule by regulating the trafficking of other regulators. The polypeptide is Multiple C2 domain and transmembrane region protein 8 (Arabidopsis thaliana (Mouse-ear cress)).